The following is a 103-amino-acid chain: Secreted Ly-6/uPAR-related protein 1 (103 aa).

The first 22 residues, 1–22 (MASRWAVQLLLVAAWSMGCGEA), serve as a signal peptide directing secretion. The region spanning 24 to 73 (KCYTCKEPMTSASCRTITRCKPEDTACMTTLVTVEAEYPFNQSPVVTRSC) is the UPAR/Ly6 domain. 5 disulfide bridges follow: Cys-25-Cys-50, Cys-28-Cys-37, Cys-43-Cys-73, Cys-77-Cys-93, and Cys-94-Cys-99.

In terms of assembly, homodimer. Interacts with PLAU. Interacts with CHRNA7. Granulocytes. Expressed in skin. Predominantly expressed in the granular layer of skin, notably the acrosyringium. Identified in several biological fluids such as sweat, saliva, tears, plasma and urine.

It is found in the secreted. Has an antitumor activity. Was found to be a marker of late differentiation of the skin. Implicated in maintaining the physiological and structural integrity of the keratinocyte layers of the skin. In vitro down-regulates keratinocyte proliferation; the function may involve the proposed role as modulator of nicotinic acetylcholine receptors (nAChRs) activity. In vitro inhibits alpha-7-dependent nAChR currents in an allosteric manner. In T cells may be involved in regulation of intracellular Ca(2+) signaling. Seems to have an immunomodulatory function in the cornea. The function may implicate a possible role as a scavenger receptor for PLAU thereby blocking PLAU-dependent functions of PLAUR such as in cell migration and proliferation. This Homo sapiens (Human) protein is Secreted Ly-6/uPAR-related protein 1 (SLURP1).